The sequence spans 527 residues: Ribonuclease Y (527 aa).

A helical membrane pass occupies residues 21 to 41; the sequence is ILAIFFSFIIGIVFGGMALFV. The interval 78–97 is disordered; that stretch reads READKTRNSAETELKERRSE. One can recognise a KH domain in the interval 217–302; the sequence is TTNVVPLPSD…EVVTKAKEEV (86 aa). In terms of domain architecture, HD spans 343 to 436; it reads VLQHSIEVAQ…VSAADAISSA (94 aa).

Belongs to the RNase Y family.

The protein localises to the cell membrane. Functionally, endoribonuclease that initiates mRNA decay. The polypeptide is Ribonuclease Y (Dehalococcoides mccartyi (strain ATCC BAA-2100 / JCM 16839 / KCTC 5957 / BAV1)).